The sequence spans 62 residues: Short neurotoxin 1 (62 aa).

Residues 1 to 17 (MQCCNQQSSQPKTTTTC) show a composition bias toward polar residues. A disordered region spans residues 1 to 20 (MQCCNQQSSQPKTTTTCPGG). Cystine bridges form between Cys3–Cys24, Cys17–Cys41, Cys43–Cys54, and Cys55–Cys60.

This sequence belongs to the three-finger toxin family. Short-chain subfamily. Type I alpha-neurotoxin sub-subfamily. In terms of tissue distribution, expressed by the venom gland.

The protein localises to the secreted. Binds to muscle nicotinic acetylcholine receptor (nAChR) and inhibit acetylcholine from binding to the receptor, thereby impairing neuromuscular transmission. This Acanthophis antarcticus (Common death adder) protein is Short neurotoxin 1.